The sequence spans 813 residues: Calpain-7 (813 aa).

Met-1 carries the N-acetylmethionine modification. The residue at position 95 (Thr-95) is a Phosphothreonine. Residues 232–540 (RERFAYPMPF…YDVIYLSWNP (309 aa)) form the Calpain catalytic domain. Catalysis depends on residues Cys-290, His-458, and Asn-478. Residues 541–701 (GLLKESTCIH…INGKWSGQSA (161 aa)) form a domain III region. The domain N stretch occupies residues 702–813 (GGCGNFQETH…VIPIKTTQLQ (112 aa)).

Belongs to the peptidase C2 family.

It is found in the nucleus. Calcium-regulated non-lysosomal thiol-protease. This chain is Calpain-7 (CAPN7), found in Sus scrofa (Pig).